A 229-amino-acid chain; its full sequence is Large ribosomal subunit protein uL1 (229 aa).

It belongs to the universal ribosomal protein uL1 family. Part of the 50S ribosomal subunit.

In terms of biological role, binds directly to 23S rRNA. The L1 stalk is quite mobile in the ribosome, and is involved in E site tRNA release. Its function is as follows. Protein L1 is also a translational repressor protein, it controls the translation of the L11 operon by binding to its mRNA. This Streptococcus uberis (strain ATCC BAA-854 / 0140J) protein is Large ribosomal subunit protein uL1.